A 113-amino-acid polypeptide reads, in one-letter code: Large ribosomal subunit protein uL22 (113 aa).

Belongs to the universal ribosomal protein uL22 family. In terms of assembly, part of the 50S ribosomal subunit.

This protein binds specifically to 23S rRNA; its binding is stimulated by other ribosomal proteins, e.g. L4, L17, and L20. It is important during the early stages of 50S assembly. It makes multiple contacts with different domains of the 23S rRNA in the assembled 50S subunit and ribosome. In terms of biological role, the globular domain of the protein is located near the polypeptide exit tunnel on the outside of the subunit, while an extended beta-hairpin is found that lines the wall of the exit tunnel in the center of the 70S ribosome. The chain is Large ribosomal subunit protein uL22 from Bacillus thuringiensis subsp. konkukian (strain 97-27).